The primary structure comprises 321 residues: PI-PLC X domain-containing protein 3 (321 aa).

Residues 22–197 enclose the PI-PLC X-box domain; it reads SIHSIPLTNL…DYQVLVFYHS (176 aa). Catalysis depends on residues His37 and His114.

In terms of tissue distribution, widely expressed, with highest levels in brain, followed by heart atrium. Not detected in small intestine, nor stomach.

It localises to the cytoplasm. The protein is PI-PLC X domain-containing protein 3 (Plcxd3) of Mus musculus (Mouse).